Reading from the N-terminus, the 600-residue chain is Probable methyltransferase PMT21 (600 aa).

The Cytoplasmic segment spans residues 1–16; that stretch reads MKYKDEKYEKAEKGSR. The helical; Signal-anchor for type II membrane protein transmembrane segment at 17–37 threads the bilayer; the sequence is ILPKTVLLILLCGLSFYLGGL. The Lumenal segment spans residues 38-600; sequence YCGKNIIEVS…YSSNASSETN (563 aa). N-linked (GlcNAc...) asparagine glycosylation is present at Asn594.

The protein belongs to the methyltransferase superfamily.

It localises to the endoplasmic reticulum membrane. The polypeptide is Probable methyltransferase PMT21 (ERD3) (Arabidopsis thaliana (Mouse-ear cress)).